The primary structure comprises 103 residues: Small ribosomal subunit protein uS10 (103 aa).

This sequence belongs to the universal ribosomal protein uS10 family. In terms of assembly, part of the 30S ribosomal subunit.

Its function is as follows. Involved in the binding of tRNA to the ribosomes. This chain is Small ribosomal subunit protein uS10, found in Chlorobium luteolum (strain DSM 273 / BCRC 81028 / 2530) (Pelodictyon luteolum).